Reading from the N-terminus, the 426-residue chain is Histidine--tRNA ligase (426 aa).

It belongs to the class-II aminoacyl-tRNA synthetase family. As to quaternary structure, homodimer.

It localises to the cytoplasm. It carries out the reaction tRNA(His) + L-histidine + ATP = L-histidyl-tRNA(His) + AMP + diphosphate + H(+). The protein is Histidine--tRNA ligase of Prochlorococcus marinus (strain AS9601).